Here is a 691-residue protein sequence, read N- to C-terminus: WD repeat-containing protein 48 homolog (691 aa).

WD repeat units lie at residues 27–82 (LHRS…PVQY), 88–130 (RHTD…YLDS), 133–168 (LHTDYVSCLAYAPLAEKVVSASFDRNIFVYDVNSNF), 180–219 (GCKNSIYSLATTPNLSHCLFFSPHQQIRMFDPRTNDKPMK), 222–261 (GHSDNVRALLLNDDGTRALSAGSDGTIRLWDIGMQKNIAT), 264–303 (AHEEGVWTIQVDASFKFVYSGGRDRYVLKSPVNDLSKFQV), 306–347 (KEEA…QNSN), and 399–438 (SGAPAINKYKILNDKRHVLTSDTEDNVALYDVLAGKKVKE).

This sequence belongs to the WD repeat WDR48 family. Interacts with usp-46; the interaction increases the catalytic activity of usp-46 in the presence of wdr-20.

Its function is as follows. Together with wdr-20, binds to and stimulates the activity of the deubiquitinating enzyme usp-46, leading to deubiquitination and stabilization of the glr-1 glutamate receptor. This Caenorhabditis briggsae protein is WD repeat-containing protein 48 homolog (wdr-48).